The sequence spans 749 residues: Cytosolic phospholipase A2 (749 aa).

The region spanning 1–124 (MASIDPYQHI…GEKKQVPFTF (124 aa)) is the C2 domain. The phospholipid binding stretch occupies residues 1 to 178 (MASIDPYQHI…LRKLLGPEKT (178 aa)). Residues Asp40, Thr41, Asp43, Asn65, Asp93, Ala94, and Asn95 each coordinate Ca(2+). Positions 138-740 (VCSSTDLRFS…NDVESRKLHH (603 aa)) constitute a PLA2c domain. Catalysis depends on Ser229, which acts as the Nucleophile. Residues 428-452 (HILGNDSSDSDDEMQEPKGTENAKA) are disordered. Over residues 442-452 (QEPKGTENAKA) the composition is skewed to basic and acidic residues. Asp549 (proton acceptor) is an active-site residue. Residues 729-749 (SLNDVESRKLHHKDSQSKFQM) are disordered. Basic and acidic residues predominate over residues 733 to 749 (VESRKLHHKDSQSKFQM).

It is found in the cytoplasm. Its subcellular location is the cytoplasmic vesicle. It catalyses the reaction a 1,2-diacyl-sn-glycero-3-phosphocholine + H2O = a 1-acyl-sn-glycero-3-phosphocholine + a fatty acid + H(+). The catalysed reaction is a 1-acyl-sn-glycero-3-phosphocholine + H2O = sn-glycerol 3-phosphocholine + a fatty acid + H(+). With respect to regulation, stimulated by agonists such as ATP, EGF, thrombin and bradykinin as well as by cytosolic Ca(2+). Its function is as follows. Selectively hydrolyzes arachidonyl phospholipids in the sn-2 position releasing arachidonic acid. Together with its lysophospholipid activity, it is implicated in the initiation of the inflammatory response. In Xenopus laevis (African clawed frog), this protein is Cytosolic phospholipase A2 (pla2g4a).